The primary structure comprises 196 residues: Acyl-homoserine-lactone synthase (196 aa).

The protein belongs to the autoinducer synthase family.

It catalyses the reaction a fatty acyl-[ACP] + S-adenosyl-L-methionine = an N-acyl-L-homoserine lactone + S-methyl-5'-thioadenosine + holo-[ACP] + H(+). Its function is as follows. Required for the synthesis of a yet unknown N-aceyl-homoserine lactone (N-aceyl-HSL), an autoinducer molecule which binds to PhzR and thus regulates phenazine production. The sequence is that of Acyl-homoserine-lactone synthase (phzI) from Pseudomonas fluorescens.